The following is a 61-amino-acid chain: Conotoxin 3 (61 aa).

The signal sequence occupies residues 1 to 21; the sequence is MRCLPVFVILLLLIASVPSDA. Residues 22–48 constitute a propeptide that is removed on maturation; that stretch reads VQLKTKDDMPLPSFNGNARRTPRMLSN. A 6'-bromotryptophan modification is found at W58.

Belongs to the conotoxin T superfamily. In terms of processing, contains 2 disulfide bonds that can be either 'C1-C3, C2-C4' or 'C1-C4, C2-C3', since these disulfide connectivities have been observed for conotoxins with cysteine framework V (for examples, see AC P0DQQ7 and AC P81755). Post-translationally, contains 2 disulfide bonds. Expressed by the venom duct.

It is found in the secreted. In Conus textile (Cloth-of-gold cone), this protein is Conotoxin 3.